A 525-amino-acid polypeptide reads, in one-letter code: GMP synthase [glutamine-hydrolyzing] (525 aa).

The region spanning 8 to 207 (KILILDFGSQ…ALDICGCAAN (200 aa)) is the Glutamine amidotransferase type-1 domain. C85 acts as the Nucleophile in catalysis. Active-site residues include H181 and E183. The 193-residue stretch at 208-400 (WKPSSIIEDA…LGLPYNMLYR (193 aa)) folds into the GMPS ATP-PPase domain. Residue 235–241 (SGGVDSS) coordinates ATP.

As to quaternary structure, homodimer.

It catalyses the reaction XMP + L-glutamine + ATP + H2O = GMP + L-glutamate + AMP + diphosphate + 2 H(+). The protein operates within purine metabolism; GMP biosynthesis; GMP from XMP (L-Gln route): step 1/1. Functionally, catalyzes the synthesis of GMP from XMP. In Shewanella putrefaciens (strain CN-32 / ATCC BAA-453), this protein is GMP synthase [glutamine-hydrolyzing].